We begin with the raw amino-acid sequence, 137 residues long: Large ribosomal subunit protein uL16 (137 aa).

Belongs to the universal ribosomal protein uL16 family. Part of the 50S ribosomal subunit.

Functionally, binds 23S rRNA and is also seen to make contacts with the A and possibly P site tRNAs. The sequence is that of Large ribosomal subunit protein uL16 from Leuconostoc citreum (strain KM20).